Here is a 443-residue protein sequence, read N- to C-terminus: Signal recognition particle 54 kDa protein (443 aa).

GTP-binding positions include 104 to 111, 184 to 188, and 242 to 245; these read GLQGSGKT, DTAGR, and TKLD.

This sequence belongs to the GTP-binding SRP family. SRP54 subfamily. As to quaternary structure, part of the signal recognition particle protein translocation system, which is composed of SRP and FtsY. Archaeal SRP consists of a 7S RNA molecule of 300 nucleotides and two protein subunits: SRP54 and SRP19.

The protein resides in the cytoplasm. The enzyme catalyses GTP + H2O = GDP + phosphate + H(+). Its function is as follows. Involved in targeting and insertion of nascent membrane proteins into the cytoplasmic membrane. Binds to the hydrophobic signal sequence of the ribosome-nascent chain (RNC) as it emerges from the ribosomes. The SRP-RNC complex is then targeted to the cytoplasmic membrane where it interacts with the SRP receptor FtsY. The sequence is that of Signal recognition particle 54 kDa protein from Methanosarcina mazei (strain ATCC BAA-159 / DSM 3647 / Goe1 / Go1 / JCM 11833 / OCM 88) (Methanosarcina frisia).